We begin with the raw amino-acid sequence, 602 residues long: Serine/threonine-protein phosphatase 2A 56 kDa regulatory subunit delta isoform (602 aa).

Basic and acidic residues predominate over residues 1–13; that stretch reads MPYKLKKEKEPPK. A disordered region spans residues 1–96; that stretch reads MPYKLKKEKE…QSSSRFNLSK (96 aa). 5 repeat units span residues 37-38, 39-40, 41-42, 43-44, and 45-46. Residues 37–52 form an 8 X 2 AA approximate tandem repeats of Q-P region; the sequence is QPQPQPQPQPQAQSQP. Low complexity predominate over residues 46 to 55; sequence PQAQSQPPSS. The 6; approximate repeat unit spans residues 47–48; that stretch reads QA. The 7; approximate repeat unit spans residues 49 to 50; the sequence is QS. The stretch at 51–52 is repeat 8; sequence QP. Threonine 63 bears the Phosphothreonine mark. Serine 88, serine 89, and serine 90 each carry phosphoserine. The SH3-binding; class I signature appears at 523-530; that stretch reads RAPPPLPP. The short motif at 548 to 565 is the Nuclear localization signal element; that stretch reads KRTVETEAVQMLKDIKKE. Phosphoserine occurs at positions 573 and 598.

This sequence belongs to the phosphatase 2A regulatory subunit B56 family. In terms of assembly, PP2A consists of a common heterodimeric core enzyme, composed of a 36 kDa catalytic subunit (subunit C) and a 65 kDa constant regulatory subunit (PR65 or subunit A), that associates with a variety of regulatory subunits. Proteins that associate with the core dimer include three families of regulatory subunits B (the R2/B/PR55/B55, R3/B''/PR72/PR130/PR59 and R5/B'/B56 families), the 48 kDa variable regulatory subunit, viral proteins, and cell signaling molecules. Interacts with the PP2A A subunit PPP2R1A. Interacts with SGO1. Interacts with ADCY8. In terms of tissue distribution, isoform Delta-2 is widely expressed. Isoform Delta-1 is highly expressed in brain.

Its subcellular location is the cytoplasm. It is found in the nucleus. The B regulatory subunit might modulate substrate selectivity and catalytic activity, and might also direct the localization of the catalytic enzyme to a particular subcellular compartment. The sequence is that of Serine/threonine-protein phosphatase 2A 56 kDa regulatory subunit delta isoform (PPP2R5D) from Homo sapiens (Human).